A 154-amino-acid chain; its full sequence is Transcriptional repressor NrdR (154 aa).

Residues 1-22 (MECPNCHKNASRVIDSRPSDEN) form a disordered region. Residues 3–34 (CPNCHKNASRVIDSRPSDENRAIRRRRECENC) fold into a zinc finger. The 91-residue stretch at 49–139 (LLVVKNDGTR…IYRQFKDVSG (91 aa)) folds into the ATP-cone domain.

It belongs to the NrdR family. Zn(2+) is required as a cofactor.

Functionally, negatively regulates transcription of bacterial ribonucleotide reductase nrd genes and operons by binding to NrdR-boxes. In Lactobacillus johnsonii (strain CNCM I-12250 / La1 / NCC 533), this protein is Transcriptional repressor NrdR.